The following is a 238-amino-acid chain: Probable transcriptional regulatory protein SSU05_0402 (238 aa).

Belongs to the TACO1 family. YeeN subfamily.

It localises to the cytoplasm. The polypeptide is Probable transcriptional regulatory protein SSU05_0402 (Streptococcus suis (strain 05ZYH33)).